The following is a 345-amino-acid chain: Probable deoxyhypusine synthase 2 (345 aa).

The active-site Nucleophile is the lysine 292.

The protein belongs to the deoxyhypusine synthase family. NAD(+) serves as cofactor.

It carries out the reaction [eIF5A protein]-L-lysine + spermidine = [eIF5A protein]-deoxyhypusine + propane-1,3-diamine. Its pathway is protein modification; eIF5A hypusination. Functionally, catalyzes the NAD-dependent oxidative cleavage of spermidine and the subsequent transfer of the butylamine moiety of spermidine to the epsilon-amino group of a specific lysine residue of the eIF-5A precursor protein to form the intermediate deoxyhypusine residue. This Methanosarcina mazei (strain ATCC BAA-159 / DSM 3647 / Goe1 / Go1 / JCM 11833 / OCM 88) (Methanosarcina frisia) protein is Probable deoxyhypusine synthase 2 (dys2).